The following is a 210-amino-acid chain: FMN-dependent NADH:quinone oxidoreductase (210 aa).

Residues 17 to 19 and 148 to 151 contribute to the FMN site; these read SCS and SSGG.

It belongs to the azoreductase type 1 family. As to quaternary structure, homodimer. The cofactor is FMN.

The catalysed reaction is 2 a quinone + NADH + H(+) = 2 a 1,4-benzosemiquinone + NAD(+). It catalyses the reaction N,N-dimethyl-1,4-phenylenediamine + anthranilate + 2 NAD(+) = 2-(4-dimethylaminophenyl)diazenylbenzoate + 2 NADH + 2 H(+). In terms of biological role, quinone reductase that provides resistance to thiol-specific stress caused by electrophilic quinones. Also exhibits azoreductase activity. Catalyzes the reductive cleavage of the azo bond in aromatic azo compounds to the corresponding amines. This is FMN-dependent NADH:quinone oxidoreductase from Geotalea uraniireducens (strain Rf4) (Geobacter uraniireducens).